Here is a 265-residue protein sequence, read N- to C-terminus: Small ribosomal subunit protein eS1 (265 aa).

A disordered region spans residues 234–256 (EGSTTTSKGVTSEGGEKVDRVDG). The segment covering 247–256 (GGEKVDRVDG) has biased composition (basic and acidic residues).

This sequence belongs to the eukaryotic ribosomal protein eS1 family. Component of the small ribosomal subunit. Mature ribosomes consist of a small (40S) and a large (60S) subunit. The 40S subunit contains about 33 different proteins and 1 molecule of RNA (18S). The 60S subunit contains about 49 different proteins and 3 molecules of RNA (28S, 5.8S and 5S).

It is found in the cytoplasm. This chain is Small ribosomal subunit protein eS1, found in Aplysia californica (California sea hare).